Consider the following 350-residue polypeptide: D-alanine--D-alanine ligase (350 aa).

An ATP-grasp domain is found at 134 to 337 (KIFAAQRGVK…LPKKHSIKVS (204 aa)). 160–212 (IAYPIILKPARLGSSIGVSVINEEKELDYGRDLAFEYDDTIIAESFKSGVKEY) serves as a coordination point for ATP. Aspartate 289, glutamate 301, and asparagine 303 together coordinate Mg(2+).

The protein belongs to the D-alanine--D-alanine ligase family. Mg(2+) is required as a cofactor. Mn(2+) serves as cofactor.

Its subcellular location is the cytoplasm. It catalyses the reaction 2 D-alanine + ATP = D-alanyl-D-alanine + ADP + phosphate + H(+). It participates in cell wall biogenesis; peptidoglycan biosynthesis. Cell wall formation. This Helicobacter hepaticus (strain ATCC 51449 / 3B1) protein is D-alanine--D-alanine ligase.